Reading from the N-terminus, the 97-residue chain is Large ribosomal subunit protein bL28 (97 aa).

It belongs to the bacterial ribosomal protein bL28 family.

The protein is Large ribosomal subunit protein bL28 of Rickettsia bellii (strain OSU 85-389).